Here is a 117-residue protein sequence, read N- to C-terminus: UPF0127 protein PYRAB11210 (117 aa).

It belongs to the UPF0127 family.

This chain is UPF0127 protein PYRAB11210, found in Pyrococcus abyssi (strain GE5 / Orsay).